Consider the following 256-residue polypeptide: Triosephosphate isomerase (256 aa).

12–14 (NWK) lines the substrate pocket. Histidine 99 acts as the Electrophile in catalysis. Residue glutamate 169 is the Proton acceptor of the active site. Substrate-binding positions include glycine 175, serine 214, and 235–236 (GG).

The protein belongs to the triosephosphate isomerase family. In terms of assembly, homodimer.

The protein localises to the cytoplasm. The enzyme catalyses D-glyceraldehyde 3-phosphate = dihydroxyacetone phosphate. It functions in the pathway carbohydrate biosynthesis; gluconeogenesis. Its pathway is carbohydrate degradation; glycolysis; D-glyceraldehyde 3-phosphate from glycerone phosphate: step 1/1. Its function is as follows. Involved in the gluconeogenesis. Catalyzes stereospecifically the conversion of dihydroxyacetone phosphate (DHAP) to D-glyceraldehyde-3-phosphate (G3P). This is Triosephosphate isomerase from Rhizobium meliloti (strain 1021) (Ensifer meliloti).